We begin with the raw amino-acid sequence, 194 residues long: Prefoldin subunit 3 (194 aa).

This sequence belongs to the prefoldin subunit alpha family. As to quaternary structure, heterohexamer of two PFD-alpha type and four PFD-beta type subunits. Interacts with itself. Interacts with Vhl and betaTub56D/tubulin beta-1 chain. Interacts with tubulin alpha-beta heterodimers by itself or in complex with Vhl. Does not interact with microtubules (MTs). In terms of tissue distribution, expressed in larval central nervous system (CNS) and pupal testis (at protein level).

The protein resides in the cytoplasm. Its function is as follows. Binds specifically to cytosolic chaperonin (c-CPN) and transfers target proteins to it. Binds to nascent polypeptide chain and promotes folding in an environment in which there are many competing pathways for nonnative proteins. Required for tubulin stability and spindle and centrosome formation in cooperation with Vhl. The polypeptide is Prefoldin subunit 3 (mgr) (Drosophila melanogaster (Fruit fly)).